The sequence spans 408 residues: LL-diaminopimelate aminotransferase (408 aa).

Substrate is bound by residues tyrosine 15 and glycine 42. Pyridoxal 5'-phosphate is bound by residues tyrosine 72, serine 108–lysine 109, tyrosine 132, asparagine 187, tyrosine 218, and serine 246–serine 248. Residues lysine 109, tyrosine 132, and asparagine 187 each coordinate substrate. Lysine 249 is subject to N6-(pyridoxal phosphate)lysine. Pyridoxal 5'-phosphate-binding residues include arginine 257 and asparagine 292. Positions 292 and 388 each coordinate substrate.

It belongs to the class-I pyridoxal-phosphate-dependent aminotransferase family. LL-diaminopimelate aminotransferase subfamily. In terms of assembly, homodimer. Pyridoxal 5'-phosphate serves as cofactor.

The catalysed reaction is (2S,6S)-2,6-diaminopimelate + 2-oxoglutarate = (S)-2,3,4,5-tetrahydrodipicolinate + L-glutamate + H2O + H(+). It functions in the pathway amino-acid biosynthesis; L-lysine biosynthesis via DAP pathway; LL-2,6-diaminopimelate from (S)-tetrahydrodipicolinate (aminotransferase route): step 1/1. Its function is as follows. Involved in the synthesis of meso-diaminopimelate (m-DAP or DL-DAP), required for both lysine and peptidoglycan biosynthesis. Catalyzes the direct conversion of tetrahydrodipicolinate to LL-diaminopimelate. This Prochlorococcus marinus subsp. pastoris (strain CCMP1986 / NIES-2087 / MED4) protein is LL-diaminopimelate aminotransferase.